The following is a 174-amino-acid chain: Transcription antitermination protein NusB (174 aa).

A disordered region spans residues 1–28; sequence MVEPKKPFMRKPPPKTGDKKPGDRKANR. The span at 16 to 25 shows a compositional bias: basic and acidic residues; it reads TGDKKPGDRK.

The protein belongs to the NusB family.

In terms of biological role, involved in transcription antitermination. Required for transcription of ribosomal RNA (rRNA) genes. Binds specifically to the boxA antiterminator sequence of the ribosomal RNA (rrn) operons. The protein is Transcription antitermination protein NusB of Rhodopseudomonas palustris (strain BisB5).